The sequence spans 147 residues: Hemoglobin subunit delta (147 aa).

Residues 3-147 (HLTPEEKTAV…VANALAHKYH (145 aa)) enclose the Globin domain. Phosphoserine is present on S51. Residues H64 and H93 each contribute to the heme b site.

This sequence belongs to the globin family. In terms of assembly, heterotetramer of two delta chains and two alpha chains. As to expression, red blood cells.

The polypeptide is Hemoglobin subunit delta (HBD) (Gorilla gorilla gorilla (Western lowland gorilla)).